Consider the following 91-residue polypeptide: Large ribosomal subunit protein eL37B (91 aa).

Positions 19, 22, 34, and 37 each coordinate Zn(2+). Residues 19–37 (CRRCGKRSFHIQKSTCACC) form a C4-type zinc finger.

This sequence belongs to the eukaryotic ribosomal protein eL37 family. As to quaternary structure, component of the large ribosomal subunit (LSU). Mature yeast ribosomes consist of a small (40S) and a large (60S) subunit. The 40S small subunit contains 1 molecule of ribosomal RNA (18S rRNA) and at least 33 different proteins. The large 60S subunit contains 3 rRNA molecules (25S, 5.8S and 5S rRNA) and at least 46 different proteins. Zn(2+) serves as cofactor.

It is found in the cytoplasm. In terms of biological role, component of the ribosome, a large ribonucleoprotein complex responsible for the synthesis of proteins in the cell. The small ribosomal subunit (SSU) binds messenger RNAs (mRNAs) and translates the encoded message by selecting cognate aminoacyl-transfer RNA (tRNA) molecules. The large subunit (LSU) contains the ribosomal catalytic site termed the peptidyl transferase center (PTC), which catalyzes the formation of peptide bonds, thereby polymerizing the amino acids delivered by tRNAs into a polypeptide chain. The nascent polypeptides leave the ribosome through a tunnel in the LSU and interact with protein factors that function in enzymatic processing, targeting, and the membrane insertion of nascent chains at the exit of the ribosomal tunnel. The chain is Large ribosomal subunit protein eL37B (rpl3702) from Schizosaccharomyces pombe (strain 972 / ATCC 24843) (Fission yeast).